The primary structure comprises 1228 residues: AT-rich interactive domain-containing protein 4B (1228 aa).

Disordered regions lie at residues 123 to 167 and 266 to 307; these read LPLT…DDRK and KTEL…PFPE. Residues Ser-276, Ser-295, and Ser-296 each carry the phosphoserine modification. A compositionally biased stretch (acidic residues) spans 277-305; the sequence is EAEEEEEEEDDEKEKEDNSSEEEEEIEPF. Positions 306–398 constitute an ARID domain; that stretch reads PEERENFLQQ…YLYGFEEYCR (93 aa). Residues Lys-428 and Lys-461 each participate in a glycyl lysine isopeptide (Lys-Gly) (interchain with G-Cter in SUMO2) cross-link. Positions 437-464 are enriched in basic and acidic residues; the sequence is EVNVEDSKNMIPKEETPAEDESERKENI. Disordered stretches follow at residues 437-466, 479-525, 539-606, 620-802, 825-1129, and 1168-1204; these read EVNV…NIKP, PAQS…EQAR, RPAD…SDTG, LQAS…EEKR, LNNS…RLPK, and SEVA…SITA. Position 482 is a phosphoserine (Ser-482). A compositionally biased stretch (basic and acidic residues) spans 483-511; the sequence is DQEKEANITKLEEKESLEDKDGATARAEE. Residues 546–555 are compositionally biased toward basic residues; that stretch reads PKIKHRKKIK. Residues 556–569 show a composition bias toward basic and acidic residues; the sequence is NKLDKEKDRDEKYS. Phosphoserine is present on residues Ser-579, Ser-581, and Ser-588. Positions 596-606 are enriched in basic and acidic residues; sequence DLADAKNSDTG. Ser-630 is modified (phosphoserine). Composition is skewed to basic and acidic residues over residues 635–667 and 691–700; these read ERCA…KEEL and SPERLRKDVE. Lys-664 participates in a covalent cross-link: Glycyl lysine isopeptide (Lys-Gly) (interchain with G-Cter in SUMO2). A phosphoserine mark is found at Ser-691 and Ser-703. The segment covering 701 to 713 has biased composition (acidic residues); sequence AISEDTDFEEEDE. The residue at position 706 (Thr-706) is a Phosphothreonine. Residues 721–730 are compositionally biased toward basic and acidic residues; the sequence is VKKDTTDKAL. Residues 744-753 are compositionally biased toward polar residues; the sequence is IQTNCLQSGS. Basic and acidic residues-rich tracts occupy residues 755-765, 825-843, and 911-926; these read GKKEDRTKSKE, LNNS…RKDV, and KPVE…RKTE. Residues 927–937 are compositionally biased toward polar residues; it reads FPSSGSNSVLN. Residue Ser-930 is modified to Phosphoserine. Thr-942 bears the Phosphothreonine mark. Residues 944 to 965 are compositionally biased toward low complexity; sequence ESPSSVTVTETSQQQSSVTVSV. Residue Ser-945 is modified to Phosphoserine. Basic and acidic residues predominate over residues 972 to 981; sequence EEVRSIKSET. Positions 1003-1017 are enriched in low complexity; that stretch reads SSPAGFNASVSSSSS. Positions 1046 to 1064 are enriched in basic residues; the sequence is KKQKRSHKATVVNNKKKGK. Thr-1066 carries the post-translational modification Phosphothreonine. Residues Ser-1068, Ser-1069, Ser-1071, and Ser-1075 each carry the phosphoserine modification. Basic and acidic residues predominate over residues 1112-1124; it reads KNGDKDPDLKEPS. Residues 1141-1186 are a coiled coil; it reads ENMTSAERISILQEKLQEIRKHYLSLKSEVASIDRRRKRLKKKERE. Residues 1188 to 1204 show a composition bias toward low complexity; that stretch reads AATSSSSSSPSSSSITA.

In terms of assembly, component of a Sin3A corepressor complex consisting of SIN3A, SAP130, SUDS3/SAP45, SAP180, HDAC1 and HDAC2. Interacts with ARID4A. Interacts with AR.

The protein localises to the nucleus. In terms of biological role, acts as a transcriptional repressor. May function in the assembly and/or enzymatic activity of the Sin3A corepressor complex or in mediating interactions between the complex and other regulatory complexes. Plays a role in the regulation of epigenetic modifications at the PWS/AS imprinting center near the SNRPN promoter, where it might function as part of a complex with RB1 and ARID4A. Involved in spermatogenesis, together with ARID4A, where it functions as a transcriptional coactivator for AR (androgen receptor) and enhances expression of genes required for sperm maturation. Regulates expression of the tight junction protein CLDN3 in the testis, which is important for integrity of the blood-testis barrier. Plays a role in myeloid homeostasis where it regulates the histone methylation state of bone marrow cells and expression of various genes involved in hematopoiesis. May function as a leukemia suppressor. The sequence is that of AT-rich interactive domain-containing protein 4B (Arid4b) from Rattus norvegicus (Rat).